Here is a 714-residue protein sequence, read N- to C-terminus: Fatty acid oxidation complex subunit alpha (714 aa).

Residues 1-190 (MEMASAFTLN…KLGLVDDVVP (190 aa)) form an enoyl-CoA hydratase region. Residues 306–714 (APLNSVGILG…FWKTTATDLQ (409 aa)) are 3-hydroxyacyl-CoA dehydrogenase.

The protein in the N-terminal section; belongs to the enoyl-CoA hydratase/isomerase family. It in the central section; belongs to the 3-hydroxyacyl-CoA dehydrogenase family. Heterotetramer of two alpha chains (FadJ) and two beta chains (FadI).

The protein localises to the cytoplasm. The catalysed reaction is a (3S)-3-hydroxyacyl-CoA = a (2E)-enoyl-CoA + H2O. The enzyme catalyses a 4-saturated-(3S)-3-hydroxyacyl-CoA = a (3E)-enoyl-CoA + H2O. It catalyses the reaction a (3S)-3-hydroxyacyl-CoA + NAD(+) = a 3-oxoacyl-CoA + NADH + H(+). It carries out the reaction (3S)-3-hydroxybutanoyl-CoA = (3R)-3-hydroxybutanoyl-CoA. Its pathway is lipid metabolism; fatty acid beta-oxidation. Catalyzes the formation of a hydroxyacyl-CoA by addition of water on enoyl-CoA. Also exhibits 3-hydroxyacyl-CoA epimerase and 3-hydroxyacyl-CoA dehydrogenase activities. The polypeptide is Fatty acid oxidation complex subunit alpha (Escherichia coli O81 (strain ED1a)).